A 271-amino-acid polypeptide reads, in one-letter code: Enolase-phosphatase E1 (271 aa).

2 residues coordinate Mg(2+): aspartate 16 and glutamate 18. Substrate-binding positions include 150–151 (SS) and lysine 199. Aspartate 226 contributes to the Mg(2+) binding site.

Belongs to the HAD-like hydrolase superfamily. MasA/MtnC family. Monomer. Mg(2+) serves as cofactor.

The protein localises to the cytoplasm. It is found in the nucleus. It catalyses the reaction 5-methylsulfanyl-2,3-dioxopentyl phosphate + H2O = 1,2-dihydroxy-5-(methylsulfanyl)pent-1-en-3-one + phosphate. Its pathway is amino-acid biosynthesis; L-methionine biosynthesis via salvage pathway; L-methionine from S-methyl-5-thio-alpha-D-ribose 1-phosphate: step 3/6. The protein operates within amino-acid biosynthesis; L-methionine biosynthesis via salvage pathway; L-methionine from S-methyl-5-thio-alpha-D-ribose 1-phosphate: step 4/6. Its function is as follows. Bifunctional enzyme that catalyzes the enolization of 2,3-diketo-5-methylthiopentyl-1-phosphate (DK-MTP-1-P) into the intermediate 2-hydroxy-3-keto-5-methylthiopentenyl-1-phosphate (HK-MTPenyl-1-P), which is then dephosphorylated to form the acireductone 1,2-dihydroxy-3-keto-5-methylthiopentene (DHK-MTPene). In Candida dubliniensis (strain CD36 / ATCC MYA-646 / CBS 7987 / NCPF 3949 / NRRL Y-17841) (Yeast), this protein is Enolase-phosphatase E1.